The following is a 76-amino-acid chain: Adipogenesis regulatory factor (76 aa).

In terms of tissue distribution, expressed in adipose tissue (at protein level). Highly expressed in omental and subcutaneous adipose tissues. Expressed in heart, cornea, liver, kidney and spleen.

It is found in the nucleus. In terms of biological role, plays a role in fat cell development; promotes adipogenic differentiation and stimulates transcription initiation of master adipogenesis factors like PPARG and CEBPA at early stages of preadipocyte differentiation. Its overexpression confers resistance to the anticancer chemotherapeutic drug cisplatin. This is Adipogenesis regulatory factor (ADIRF) from Homo sapiens (Human).